The sequence spans 85 residues: MSLLDYFKSKKKPSTAVMAKERLQIIVAHQRGQRDTPDYFPQMKQEIIAVIRKYVHISDDQVSVQLDQNDDNLSVLELNVTLPDR.

Belongs to the MinE family.

Prevents the cell division inhibition by proteins MinC and MinD at internal division sites while permitting inhibition at polar sites. This ensures cell division at the proper site by restricting the formation of a division septum at the midpoint of the long axis of the cell. The sequence is that of Cell division topological specificity factor from Shewanella sp. (strain ANA-3).